A 219-amino-acid polypeptide reads, in one-letter code: Capsid protein (219 aa).

The tract at residues Arg5–Arg29 is nuclear localization signals.

Belongs to the circoviridae capsid protein family. Homomultimer. Assembles in the nucleus, presumably in an immature form, then migrates to the cytoplasm once assembled as mature virion. Interacts with Rep; this interaction relocates Rep into the nucleus.

Its subcellular location is the host nucleus. It localises to the virion. Self-assembles to form the virion icosahedral capsid with a T=1 symmetry. This very small capsid (17-22 nm in diameter) allows the virus to be very stable in the environment and resistant to some disinfectants, including detergents. Essential for the initial attachment to heparan sulfate moieties and chondroitin sulfate B of the host cell surface proteoglycans. After attachment, the virus is endocytosed and traffics to the nucleus. The capsid protein binds and transports the viral genome and Rep across the nuclear envelope. The protein is Capsid protein (Cap) of Homo sapiens (Human).